The sequence spans 684 residues: Beta-mannosyltransferase 1 (684 aa).

Topologically, residues 1–28 (MDKFIQSFSHQYLDSSSSLKLTARRKRK) are cytoplasmic. Residues 29-49 (LTILGLFLFSLISLMIIISYS) traverse the membrane as a helical segment. Residues 50–684 (NNNILPGLSG…KFCKIYGETF (635 aa)) are Extracellular-facing. The N-linked (GlcNAc...) asparagine glycan is linked to N297.

This sequence belongs to the BMT family.

The protein localises to the membrane. Its function is as follows. Beta-mannosyltransferase involved in cell wall biosynthesis. Required for addition of the first beta-mannose residue to acid-stable fraction of cell wall phosphopeptidomannan. Plays a key role in reducing host inflammatory response. The protein is Beta-mannosyltransferase 1 (BMT1) of Candida albicans (strain SC5314 / ATCC MYA-2876) (Yeast).